Here is a 514-residue protein sequence, read N- to C-terminus: Developmental and secondary metabolism regulator veA (514 aa).

Residues 26–218 (NRHLWYQLTV…ADQGCHVRIR (193 aa)) enclose the Velvet domain. The Nuclear localization signal motif lies at 40-45 (ERARAC). A disordered region spans residues 219 to 463 (RDVRMRKRDA…PIGSKRKHDQ (245 aa)). A compositionally biased stretch (basic and acidic residues) spans 228–243 (AKSNNGRDRREDDMAR). The segment covering 256 to 267 (SAAARARSMSNS) has biased composition (low complexity). Positions 386-396 (SYPSTPVSSHP) are enriched in polar residues. Residues 411 to 448 (KSPSNSVSPSNSSLKITDLLVQPLPSSEPKLEVGSAPC) are PEST. Over residues 412-423 (SPSNSVSPSNSS) the composition is skewed to low complexity.

This sequence belongs to the velvet family. VeA subfamily. As to quaternary structure, component of the heterotrimeric velvet complex composed of laeA, veA and velB; VeA acting as a bridging protein between laeA and velB.

The protein localises to the nucleus. The protein resides in the cytoplasm. Component of the velvet transcription factor complex that controls sexual/asexual developmental ratio in response to light, promoting sexual development in the darkness while stimulating asexual sporulation under illumination. The velvet complex hat acts as a global regulator for secondary metabolite gene expression. Controls the expression of the cephalosporin C gene cluster. Regulates hyphal fragmentation. The polypeptide is Developmental and secondary metabolism regulator veA (Hapsidospora chrysogenum (strain ATCC 11550 / CBS 779.69 / DSM 880 / IAM 14645 / JCM 23072 / IMI 49137) (Acremonium chrysogenum)).